Here is a 295-residue protein sequence, read N- to C-terminus: ATP synthase gamma chain (295 aa).

Belongs to the ATPase gamma chain family. As to quaternary structure, F-type ATPases have 2 components, CF(1) - the catalytic core - and CF(0) - the membrane proton channel. CF(1) has five subunits: alpha(3), beta(3), gamma(1), delta(1), epsilon(1). CF(0) has three main subunits: a, b and c.

It is found in the cell inner membrane. Its function is as follows. Produces ATP from ADP in the presence of a proton gradient across the membrane. The gamma chain is believed to be important in regulating ATPase activity and the flow of protons through the CF(0) complex. This chain is ATP synthase gamma chain, found in Cytophaga hutchinsonii (strain ATCC 33406 / DSM 1761 / CIP 103989 / NBRC 15051 / NCIMB 9469 / D465).